The sequence spans 127 residues: Large ribosomal subunit protein bL12 (127 aa).

This sequence belongs to the bacterial ribosomal protein bL12 family. As to quaternary structure, homodimer. Part of the ribosomal stalk of the 50S ribosomal subunit. Forms a multimeric L10(L12)X complex, where L10 forms an elongated spine to which 2 to 4 L12 dimers bind in a sequential fashion. Binds GTP-bound translation factors.

Functionally, forms part of the ribosomal stalk which helps the ribosome interact with GTP-bound translation factors. Is thus essential for accurate translation. In Streptomyces griseus subsp. griseus (strain JCM 4626 / CBS 651.72 / NBRC 13350 / KCC S-0626 / ISP 5235), this protein is Large ribosomal subunit protein bL12.